Consider the following 470-residue polypeptide: UDP-N-acetylmuramate--L-alanine ligase (470 aa).

118–124 (GTHGKTT) is a binding site for ATP.

This sequence belongs to the MurCDEF family.

It localises to the cytoplasm. The catalysed reaction is UDP-N-acetyl-alpha-D-muramate + L-alanine + ATP = UDP-N-acetyl-alpha-D-muramoyl-L-alanine + ADP + phosphate + H(+). The protein operates within cell wall biogenesis; peptidoglycan biosynthesis. Functionally, cell wall formation. This is UDP-N-acetylmuramate--L-alanine ligase from Cereibacter sphaeroides (strain ATCC 17029 / ATH 2.4.9) (Rhodobacter sphaeroides).